A 140-amino-acid polypeptide reads, in one-letter code: MAIERTFSMIKPDATKRNLTGAITKMLEDAGLRVVASKRVWMSRREAEGFYAVHKERPFFGELVEFMSSGPTVVQVLEGENAIAKNREVMGATNPANAAEGTIRKVHALSIGENSVHGSDAPETAAEEIAYWFSGTEIVG.

ATP-binding residues include Lys11, Phe59, Arg87, Thr93, Arg104, and Asn114. His117 functions as the Pros-phosphohistidine intermediate in the catalytic mechanism.

This sequence belongs to the NDK family. Homotetramer. Mg(2+) serves as cofactor.

The protein resides in the cytoplasm. It catalyses the reaction a 2'-deoxyribonucleoside 5'-diphosphate + ATP = a 2'-deoxyribonucleoside 5'-triphosphate + ADP. The catalysed reaction is a ribonucleoside 5'-diphosphate + ATP = a ribonucleoside 5'-triphosphate + ADP. Its function is as follows. Major role in the synthesis of nucleoside triphosphates other than ATP. The ATP gamma phosphate is transferred to the NDP beta phosphate via a ping-pong mechanism, using a phosphorylated active-site intermediate. The polypeptide is Nucleoside diphosphate kinase (Rhizobium meliloti (strain 1021) (Ensifer meliloti)).